We begin with the raw amino-acid sequence, 258 residues long: uncharacterized protein (258 aa).

The helical transmembrane segment at glycine 163–glycine 187 threads the bilayer.

It localises to the membrane. This is an uncharacterized protein from Methanocaldococcus jannaschii (strain ATCC 43067 / DSM 2661 / JAL-1 / JCM 10045 / NBRC 100440) (Methanococcus jannaschii).